We begin with the raw amino-acid sequence, 408 residues long: Dual-specificity RNA methyltransferase RlmN (408 aa).

Glu122 serves as the catalytic Proton acceptor. The Radical SAM core domain maps to 128–369 (EEDRGTLCIS…NRAGYASPIR (242 aa)). Cys135 and Cys380 form a disulfide bridge. The [4Fe-4S] cluster site is built by Cys142, Cys146, and Cys149. Residues 206-207 (GE), Ser238, 260-262 (SLH), and Asn337 each bind S-adenosyl-L-methionine. The active-site S-methylcysteine intermediate is the Cys380.

The protein belongs to the radical SAM superfamily. RlmN family. [4Fe-4S] cluster serves as cofactor.

The protein resides in the cytoplasm. It carries out the reaction adenosine(2503) in 23S rRNA + 2 reduced [2Fe-2S]-[ferredoxin] + 2 S-adenosyl-L-methionine = 2-methyladenosine(2503) in 23S rRNA + 5'-deoxyadenosine + L-methionine + 2 oxidized [2Fe-2S]-[ferredoxin] + S-adenosyl-L-homocysteine. The catalysed reaction is adenosine(37) in tRNA + 2 reduced [2Fe-2S]-[ferredoxin] + 2 S-adenosyl-L-methionine = 2-methyladenosine(37) in tRNA + 5'-deoxyadenosine + L-methionine + 2 oxidized [2Fe-2S]-[ferredoxin] + S-adenosyl-L-homocysteine. Functionally, specifically methylates position 2 of adenine 2503 in 23S rRNA and position 2 of adenine 37 in tRNAs. m2A2503 modification seems to play a crucial role in the proofreading step occurring at the peptidyl transferase center and thus would serve to optimize ribosomal fidelity. The chain is Dual-specificity RNA methyltransferase RlmN from Chelativorans sp. (strain BNC1).